The following is a 364-amino-acid chain: Doublecortin domain-containing protein 2C (364 aa).

Doublecortin domains are found at residues 16-98 and 136-217; these read KTIV…LDYI and RHIN…FPYW. A disordered region spans residues 233–255; sequence VEKNSQRKKKVDSKGKEPCKYDG.

Expressed in testis and spermatozoa (at protein level).

The protein resides in the cell projection. It is found in the cilium. Its subcellular location is the flagellum. It localises to the cytoplasm. This is Doublecortin domain-containing protein 2C from Homo sapiens (Human).